Here is a 266-residue protein sequence, read N- to C-terminus: Respiratory nitrate reductase beta chain (266 aa).

4Fe-4S ferredoxin-type domains are found at residues 3–32 and 30–61; these read VGMV…AWFN and WFNN…KREE. Residues Cys12, Cys15, Cys18, Cys22, Cys39, Cys42, and Cys47 each contribute to the [4Fe-4S] cluster site. [3Fe-4S] cluster-binding residues include Cys51 and Cys73. [4Fe-4S] cluster is bound by residues Cys77, Cys81, Cys84, Cys96, and Cys100.

In terms of assembly, heterotrimer composed of an alpha, a beta and a gamma chain. Alpha and beta are catalytic chains; gamma chains are involved in binding the enzyme complex to the cytoplasmic membrane. Requires [4Fe-4S] cluster as cofactor. [3Fe-4S] cluster serves as cofactor.

Its subcellular location is the cell membrane. The protein localises to the cytoplasm. It carries out the reaction nitrate + a quinol = a quinone + nitrite + H2O. Its activity is regulated as follows. Inhibited by micromolar concentrations of azide. The nitrate reductase enzyme complex allows Bradyrhizobium sp. USDA 3045 to use nitrate as an electron acceptor during anaerobic growth. The beta chain is an electron transfer unit containing four cysteine clusters involved in the formation of iron-sulfur centers. Electrons are transferred from the gamma chain to the molybdenum cofactor of the alpha subunit. The chain is Respiratory nitrate reductase beta chain (narH) from Bradyrhizobium sp.